Consider the following 396-residue polypeptide: Protein nipi-4 (396 aa).

Over 1-20 (MELDHTPPPSVLNDNCSASY) the chain is Extracellular. N-linked (GlcNAc...) asparagine glycosylation is present at Asn15. Residues 21-41 (MTPYATVIAMSGLYLLAIFYF) form a helical membrane-spanning segment. Residues 42–396 (CKKSKKMCQP…EHHCQSVIHY (355 aa)) lie on the Cytoplasmic side of the membrane. One can recognise a Protein kinase domain in the interval 81–368 (EVDDFQIGQT…SRLSELHHIV (288 aa)). Residues 87–95 (IGQTADGFI) and Lys111 contribute to the ATP site.

It belongs to the protein kinase superfamily. Tyr protein kinase family. In terms of tissue distribution, expressed in the epidermis of larvae and adults and in vulval and rectal cells.

It is found in the membrane. Functionally, pseudokinase which plays a role in resistance to fungal infection by promoting expression of antimicrobial peptides (nlp-29, nlp-31, nlp-34, cnc-1, cnc-2 and cnc-4) in the epidermis. In addition, up-regulates nlp-29 expression upon physical wounding and in response to phorbol ester PMA treatment. The sequence is that of Protein nipi-4 from Caenorhabditis elegans.